A 247-amino-acid chain; its full sequence is Reticulon-like protein B8 (247 aa).

The 187-residue stretch at 61 to 247 (SADVLLWRNK…SGKFGLKKRE (187 aa)) folds into the Reticulon domain. A run of 3 helical transmembrane segments spans residues 71-91 (KISA…EWIN), 92-112 (FHFL…QFVW), and 166-186 (FLMA…CNFL).

Its subcellular location is the endoplasmic reticulum membrane. This is Reticulon-like protein B8 (RTNLB8) from Arabidopsis thaliana (Mouse-ear cress).